Reading from the N-terminus, the 160-residue chain is SsrA-binding protein (160 aa).

The protein belongs to the SmpB family.

The protein localises to the cytoplasm. Its function is as follows. Required for rescue of stalled ribosomes mediated by trans-translation. Binds to transfer-messenger RNA (tmRNA), required for stable association of tmRNA with ribosomes. tmRNA and SmpB together mimic tRNA shape, replacing the anticodon stem-loop with SmpB. tmRNA is encoded by the ssrA gene; the 2 termini fold to resemble tRNA(Ala) and it encodes a 'tag peptide', a short internal open reading frame. During trans-translation Ala-aminoacylated tmRNA acts like a tRNA, entering the A-site of stalled ribosomes, displacing the stalled mRNA. The ribosome then switches to translate the ORF on the tmRNA; the nascent peptide is terminated with the 'tag peptide' encoded by the tmRNA and targeted for degradation. The ribosome is freed to recommence translation, which seems to be the essential function of trans-translation. This Pectobacterium atrosepticum (strain SCRI 1043 / ATCC BAA-672) (Erwinia carotovora subsp. atroseptica) protein is SsrA-binding protein.